We begin with the raw amino-acid sequence, 312 residues long: Acetyl-coenzyme A carboxylase carboxyl transferase subunit alpha (312 aa).

The region spanning 32–286 (LLEERLARLR…KEALLKALEE (255 aa)) is the CoA carboxyltransferase C-terminal domain.

It belongs to the AccA family. Acetyl-CoA carboxylase is a heterohexamer composed of biotin carboxyl carrier protein (AccB), biotin carboxylase (AccC) and two subunits each of ACCase subunit alpha (AccA) and ACCase subunit beta (AccD).

The protein localises to the cytoplasm. It catalyses the reaction N(6)-carboxybiotinyl-L-lysyl-[protein] + acetyl-CoA = N(6)-biotinyl-L-lysyl-[protein] + malonyl-CoA. It functions in the pathway lipid metabolism; malonyl-CoA biosynthesis; malonyl-CoA from acetyl-CoA: step 1/1. Functionally, component of the acetyl coenzyme A carboxylase (ACC) complex. First, biotin carboxylase catalyzes the carboxylation of biotin on its carrier protein (BCCP) and then the CO(2) group is transferred by the carboxyltransferase to acetyl-CoA to form malonyl-CoA. This Thermus thermophilus (strain ATCC BAA-163 / DSM 7039 / HB27) protein is Acetyl-coenzyme A carboxylase carboxyl transferase subunit alpha.